Reading from the N-terminus, the 543-residue chain is CTP synthase (543 aa).

Residues 1 to 265 (MTRFVFITGG…DQEVLRYFDL (265 aa)) form an amidoligase domain region. A CTP-binding site is contributed by Ser13. UTP is bound at residue Ser13. Position 14 to 19 (14 to 19 (SLGKGI)) interacts with ATP. L-glutamine is bound at residue Tyr54. Position 71 (Asp71) interacts with ATP. Mg(2+)-binding residues include Asp71 and Glu139. Residues 146–148 (DIE), 186–191 (KTKPTQ), and Lys222 contribute to the CTP site. Residues 186-191 (KTKPTQ) and Lys222 each bind UTP. The 252-residue stretch at 291 to 542 (RVAIVGKYTA…IAAAVKEAHR (252 aa)) folds into the Glutamine amidotransferase type-1 domain. Residue Gly354 coordinates L-glutamine. Cys381 acts as the Nucleophile; for glutamine hydrolysis in catalysis. L-glutamine is bound by residues 382 to 385 (FGMQ), Glu405, and Arg470. Catalysis depends on residues His515 and Glu517.

The protein belongs to the CTP synthase family. Homotetramer.

The enzyme catalyses UTP + L-glutamine + ATP + H2O = CTP + L-glutamate + ADP + phosphate + 2 H(+). It catalyses the reaction L-glutamine + H2O = L-glutamate + NH4(+). The catalysed reaction is UTP + NH4(+) + ATP = CTP + ADP + phosphate + 2 H(+). It functions in the pathway pyrimidine metabolism; CTP biosynthesis via de novo pathway; CTP from UDP: step 2/2. Allosterically activated by GTP, when glutamine is the substrate; GTP has no effect on the reaction when ammonia is the substrate. The allosteric effector GTP functions by stabilizing the protein conformation that binds the tetrahedral intermediate(s) formed during glutamine hydrolysis. Inhibited by the product CTP, via allosteric rather than competitive inhibition. Functionally, catalyzes the ATP-dependent amination of UTP to CTP with either L-glutamine or ammonia as the source of nitrogen. Regulates intracellular CTP levels through interactions with the four ribonucleotide triphosphates. This chain is CTP synthase, found in Gluconobacter oxydans (strain 621H) (Gluconobacter suboxydans).